The chain runs to 225 residues: C-reactive protein (225 aa).

The N-terminal stretch at Met-1–Ala-19 is a signal peptide. Gln-20 is subject to Pyrrolidone carboxylic acid. Residues Ser-24–Pro-225 form the Pentraxin (PTX) domain. An intrachain disulfide couples Cys-55 to Cys-116. Ca(2+) contacts are provided by Asn-80, Glu-157, Gln-158, Asp-159, and Gln-169.

This sequence belongs to the pentraxin family. Homopentamer. Pentraxin (or pentaxin) have a discoid arrangement of 5 non-covalently bound subunits. Interacts with FCN1; may regulate monocyte activation by FCN1. Ca(2+) serves as cofactor. Found in plasma.

Its subcellular location is the secreted. In terms of biological role, displays several functions associated with host defense: it promotes agglutination, bacterial capsular swelling, phagocytosis and complement fixation through its calcium-dependent binding to phosphorylcholine. Can interact with DNA and histones and may scavenge nuclear material released from damaged circulating cells. The protein is C-reactive protein (CRP) of Mesocricetus auratus (Golden hamster).